Here is a 272-residue protein sequence, read N- to C-terminus: Cytochrome b-c1 complex subunit Rieske-1, mitochondrial (272 aa).

Residues 1–60 constitute a mitochondrion transit peptide; the sequence is MLRVAGRRLFSVSQRSSTATSFVVSRDHTLSDGGGDSSSAPRSLPSADLSSYHRSLIRGF. Positions 27 to 46 are disordered; it reads DHTLSDGGGDSSSAPRSLPS. At 61 to 109 the chain is on the mitochondrial matrix side; sequence SSQVLAQGNEIGFGSEVPATVEAVKTPNSKIVYDDHNHERYPPGDPSKR. Residues 110-132 form a helical membrane-spanning segment; sequence AFAYFVLSGGRFVYASVLRLLVL. Residues 133–272 lie on the Mitochondrial intermembrane side of the membrane; it reads KLIVSMSASK…FLEENKLLIG (140 aa). The Rieske domain occupies 201–270; the sequence is VRVKNPEWLV…YSFLEENKLL (70 aa). The [2Fe-2S] cluster site is built by cysteine 215, histidine 217, cysteine 234, and histidine 237. A disulfide bridge connects residues cysteine 220 and cysteine 236.

This sequence belongs to the Rieske iron-sulfur protein family. Component of the ubiquinol-cytochrome c oxidoreductase (cytochrome b-c1 complex, complex III, CIII), a multisubunit enzyme composed of 10 subunits. The complex is composed of 3 respiratory subunits cytochrome b (MT-CYB), cytochrome c1 (CYC1-1 or CYC1-2) and Rieske protein (UCR1-1 or UCR1-2), 2 core protein subunits MPPalpha1 (or MPPalpha2) and MPPB, and 5 low-molecular weight protein subunits QCR7-1 (or QCR7-2), UCRQ-1 (or UCRQ-2), QCR9, UCRY and probably QCR6-1 (or QCR6-2). The complex exists as an obligatory dimer and forms supercomplexes (SCs) in the inner mitochondrial membrane with NADH-ubiquinone oxidoreductase (complex I, CI), resulting in different assemblies (supercomplexes SCI(1)III(2) and SCI(2)III(4)). Requires [2Fe-2S] cluster as cofactor.

It localises to the mitochondrion inner membrane. It carries out the reaction a quinol + 2 Fe(III)-[cytochrome c](out) = a quinone + 2 Fe(II)-[cytochrome c](out) + 2 H(+)(out). Functionally, component of the ubiquinol-cytochrome c oxidoreductase, a multisubunit transmembrane complex that is part of the mitochondrial electron transport chain which drives oxidative phosphorylation. The respiratory chain contains 3 multisubunit complexes succinate dehydrogenase (complex II, CII), ubiquinol-cytochrome c oxidoreductase (cytochrome b-c1 complex, complex III, CIII) and cytochrome c oxidase (complex IV, CIV), that cooperate to transfer electrons derived from NADH and succinate to molecular oxygen, creating an electrochemical gradient over the inner membrane that drives transmembrane transport and the ATP synthase. The cytochrome b-c1 complex catalyzes electron transfer from ubiquinol to cytochrome c, linking this redox reaction to translocation of protons across the mitochondrial inner membrane, with protons being carried across the membrane as hydrogens on the quinol. In the process called Q cycle, 2 protons are consumed from the matrix, 4 protons are released into the intermembrane space and 2 electrons are passed to cytochrome c. The Rieske protein is a catalytic core subunit containing a [2Fe-2S] iron-sulfur cluster. It cycles between 2 conformational states during catalysis to transfer electrons from the quinol bound in the Q(0) site in cytochrome b to cytochrome c1. The chain is Cytochrome b-c1 complex subunit Rieske-1, mitochondrial from Arabidopsis thaliana (Mouse-ear cress).